A 156-amino-acid polypeptide reads, in one-letter code: 6,7-dimethyl-8-ribityllumazine synthase (156 aa).

5-amino-6-(D-ribitylamino)uracil is bound by residues W22, 56-58 (AYE), and 80-82 (AVI). 85-86 (DT) contacts (2S)-2-hydroxy-3-oxobutyl phosphate. H88 (proton donor) is an active-site residue. F113 lines the 5-amino-6-(D-ribitylamino)uracil pocket. R127 is a (2S)-2-hydroxy-3-oxobutyl phosphate binding site.

It belongs to the DMRL synthase family.

It catalyses the reaction (2S)-2-hydroxy-3-oxobutyl phosphate + 5-amino-6-(D-ribitylamino)uracil = 6,7-dimethyl-8-(1-D-ribityl)lumazine + phosphate + 2 H2O + H(+). It functions in the pathway cofactor biosynthesis; riboflavin biosynthesis; riboflavin from 2-hydroxy-3-oxobutyl phosphate and 5-amino-6-(D-ribitylamino)uracil: step 1/2. Its function is as follows. Catalyzes the formation of 6,7-dimethyl-8-ribityllumazine by condensation of 5-amino-6-(D-ribitylamino)uracil with 3,4-dihydroxy-2-butanone 4-phosphate. This is the penultimate step in the biosynthesis of riboflavin. The sequence is that of 6,7-dimethyl-8-ribityllumazine synthase from Deinococcus deserti (strain DSM 17065 / CIP 109153 / LMG 22923 / VCD115).